The primary structure comprises 330 residues: MTPDWHSSLILTAYILIFLTGLPANLLALRAFVSRVRQPQPAPVHILLLNLTLADLLLLLLLPFRIVEAASNFRWYLPKIVCALTGFGFYSSIYCSTWLLAGISIERYLGVAFPVQYKLSRRPLYGVIAALVAWIMSFGHCTIVIIVQYLNSTEQVGTENQITCYENFTQAQLDVVLPVRLELCLVLFFVPMTVTIFCYWRFVWIMLTQPHVGAQRRRRAVGLAVVTLLNFLVCFGPYNMSHLVGFHLRQSPSWRVEAVVFSSLNASLDPLLFYFSSSVVRRAFGKGLLLLRNPGSSMLGRGAEETVEGTKTDRGGSQTEGAQSSDFVTE.

At 1 to 8 (MTPDWHSS) the chain is on the extracellular side. A helical membrane pass occupies residues 9-29 (LILTAYILIFLTGLPANLLAL). The Cytoplasmic segment spans residues 30-43 (RAFVSRVRQPQPAP). Residues 44 to 64 (VHILLLNLTLADLLLLLLLPF) traverse the membrane as a helical segment. The Extracellular segment spans residues 65–79 (RIVEAASNFRWYLPK). The helical transmembrane segment at 80–100 (IVCALTGFGFYSSIYCSTWLL) threads the bilayer. The Cytoplasmic segment spans residues 101–126 (AGISIERYLGVAFPVQYKLSRRPLYG). Residues 127–147 (VIAALVAWIMSFGHCTIVIIV) form a helical membrane-spanning segment. Residues 148 to 184 (QYLNSTEQVGTENQITCYENFTQAQLDVVLPVRLELC) lie on the Extracellular side of the membrane. N-linked (GlcNAc...) asparagine glycosylation is found at Asn-151 and Asn-167. The helical transmembrane segment at 185 to 205 (LVLFFVPMTVTIFCYWRFVWI) threads the bilayer. Over 206 to 219 (MLTQPHVGAQRRRR) the chain is Cytoplasmic. A helical membrane pass occupies residues 220–240 (AVGLAVVTLLNFLVCFGPYNM). At 241-255 (SHLVGFHLRQSPSWR) the chain is on the extracellular side. A helical membrane pass occupies residues 256–276 (VEAVVFSSLNASLDPLLFYFS). Residues 277–330 (SSVVRRAFGKGLLLLRNPGSSMLGRGAEETVEGTKTDRGGSQTEGAQSSDFVTE) are Cytoplasmic-facing. A disordered region spans residues 300-330 (GRGAEETVEGTKTDRGGSQTEGAQSSDFVTE). Basic and acidic residues predominate over residues 302–314 (GAEETVEGTKTDR). Residues 315-330 (GGSQTEGAQSSDFVTE) are compositionally biased toward polar residues.

This sequence belongs to the G-protein coupled receptor 1 family. As to quaternary structure, interacts with FCN1 (via Fibrinogen C-terminal domain). As to expression, detected in whole wall and separated mucosa in the distal ileum and colon. Expressed by enteroendocrine cells expressing peptide YY (PYY) (at protein level).

The protein resides in the cell membrane. In terms of biological role, g protein-coupled receptor that is activated by a major product of dietary fiber digestion, the short chain fatty acids (SCFAs), and that plays a role in the regulation of whole-body energy homeostasis and in intestinal immunity. In omnivorous mammals, the short chain fatty acids acetate, propionate and butyrate are produced primarily by the gut microbiome that metabolizes dietary fibers. SCFAs serve as a source of energy but also act as signaling molecules. That G protein-coupled receptor is probably coupled to the pertussis toxin-sensitive, G(i/o)-alpha family of G proteins but also to the Gq family. Its activation results in the formation of inositol 1,4,5-trisphosphate, the mobilization of intracellular calcium, the phosphorylation of the MAPK3/ERK1 and MAPK1/ERK2 kinases and the inhibition of intracellular cAMP accumulation. May play a role in glucose homeostasis by regulating the secretion of GLP-1, in response to short-chain fatty acids accumulating in the intestine. May also regulate the production of LEP/Leptin, a hormone acting on the central nervous system to inhibit food intake. Finally, may also regulate whole-body energy homeostasis through adipogenesis regulating both differentiation and lipid storage of adipocytes. In parallel to its role in energy homeostasis, may also mediate the activation of the inflammatory and immune responses by SCFA in the intestine, regulating the rapid production of chemokines and cytokines. May also play a role in the resolution of the inflammatory response and control chemotaxis in neutrophils. In addition to SCFAs, may also be activated by the extracellular lectin FCN1 in a process leading to activation of monocytes and inducing the secretion of interleukin-8/IL-8 in response to the presence of microbes. The chain is Free fatty acid receptor 2 (Ffar2) from Rattus norvegicus (Rat).